The following is a 354-amino-acid chain: AT-hook motif nuclear-localized protein 11 (354 aa).

Disordered regions lie at residues Met-1 to Ser-158 and Lys-290 to Gly-354. 2 stretches are compositionally biased toward low complexity: residues Asn-46–Pro-55 and Val-75–Gly-96. The Bipartite nuclear localization signal motif lies at Lys-101 to Lys-109. Positions Lys-101–Asp-113 form a DNA-binding region, a.T hook 1. The segment covering Ser-122 to Asn-133 has biased composition (low complexity). Positions Lys-134–Lys-146 form a DNA-binding region, a.T hook 2. Residues Ser-159–Asp-302 form the PPC domain. The span at Thr-294–Ala-303 shows a compositional bias: acidic residues. Residues Leu-304–Gln-327 are compositionally biased toward polar residues. Over residues Met-340–Gly-354 the composition is skewed to basic and acidic residues.

It localises to the nucleus. Its function is as follows. Transcription factor that specifically binds AT-rich DNA sequences related to the nuclear matrix attachment regions (MARs). The sequence is that of AT-hook motif nuclear-localized protein 11 from Arabidopsis thaliana (Mouse-ear cress).